Here is a 373-residue protein sequence, read N- to C-terminus: NADPH-dependent 3-keto-steroid reductase HSD3B3 (373 aa).

Residues 10 to 15 (GAGGFL), Y155, and K159 contribute to the NADP(+) site. K159 serves as the catalytic Proton donor. A helical transmembrane segment spans residues 288 to 308 (VALLYWFGFLLETVSFLLRPV).

Belongs to the 3-beta-HSD family. High levels in adrenal gland, kidney and male liver (at protein level). Low levels in female liver (at protein level). Expressed in ovaries (at protein level).

It localises to the endoplasmic reticulum membrane. Its subcellular location is the mitochondrion membrane. The catalysed reaction is a 3beta-hydroxysteroid + NADP(+) = a 3-oxosteroid + NADPH + H(+). It catalyses the reaction 5alpha-androstane-3beta,17beta-diol + NADP(+) = 17beta-hydroxy-5alpha-androstan-3-one + NADPH + H(+). Its pathway is steroid metabolism. Its function is as follows. Responsible for the reduction of the oxo group on the C-3 of 5alpha-androstane steroids. Catalyzes the conversion of dihydrotestosterone to its inactive form 5alpha-androstanediol, that does not bind androgen receptor/AR. Does not function as an isomerase. In Mesocricetus auratus (Golden hamster), this protein is NADPH-dependent 3-keto-steroid reductase HSD3B3 (HSD3B3).